A 438-amino-acid chain; its full sequence is Adenylosuccinate synthetase (438 aa).

GTP is bound by residues 12–18 and 40–42; these read GDEGKGK and GHT. Asp-13 serves as the catalytic Proton acceptor. 2 residues coordinate Mg(2+): Asp-13 and Gly-40. Residues 13-16, 38-41, Thr-128, Arg-142, Gln-223, Thr-238, and Arg-302 contribute to the IMP site; these read DEGK and NAGH. His-41 serves as the catalytic Proton donor. Residue 298-304 participates in substrate binding; that stretch reads TTTGRPR. GTP contacts are provided by residues Arg-304, 330-332, and 412-414; these read KLD and GVG.

Belongs to the adenylosuccinate synthetase family. Homodimer. Mg(2+) serves as cofactor.

The protein localises to the cytoplasm. The enzyme catalyses IMP + L-aspartate + GTP = N(6)-(1,2-dicarboxyethyl)-AMP + GDP + phosphate + 2 H(+). It participates in purine metabolism; AMP biosynthesis via de novo pathway; AMP from IMP: step 1/2. Its function is as follows. Plays an important role in the de novo pathway of purine nucleotide biosynthesis. Catalyzes the first committed step in the biosynthesis of AMP from IMP. This Leifsonia xyli subsp. xyli (strain CTCB07) protein is Adenylosuccinate synthetase.